The primary structure comprises 253 residues: 3-deoxy-manno-octulosonate cytidylyltransferase (253 aa).

It belongs to the KdsB family.

The protein localises to the cytoplasm. The enzyme catalyses 3-deoxy-alpha-D-manno-oct-2-ulosonate + CTP = CMP-3-deoxy-beta-D-manno-octulosonate + diphosphate. The protein operates within nucleotide-sugar biosynthesis; CMP-3-deoxy-D-manno-octulosonate biosynthesis; CMP-3-deoxy-D-manno-octulosonate from 3-deoxy-D-manno-octulosonate and CTP: step 1/1. It participates in bacterial outer membrane biogenesis; lipopolysaccharide biosynthesis. Activates KDO (a required 8-carbon sugar) for incorporation into bacterial lipopolysaccharide in Gram-negative bacteria. The polypeptide is 3-deoxy-manno-octulosonate cytidylyltransferase (Neisseria meningitidis serogroup C (strain 053442)).